The chain runs to 106 residues: Large ribosomal subunit protein bL21 (106 aa).

The protein belongs to the bacterial ribosomal protein bL21 family. In terms of assembly, part of the 50S ribosomal subunit. Contacts protein L20.

This protein binds to 23S rRNA in the presence of protein L20. The sequence is that of Large ribosomal subunit protein bL21 from Dichelobacter nodosus (strain VCS1703A).